We begin with the raw amino-acid sequence, 423 residues long: Histidine--tRNA ligase (423 aa).

This sequence belongs to the class-II aminoacyl-tRNA synthetase family. Homodimer.

The protein resides in the cytoplasm. The catalysed reaction is tRNA(His) + L-histidine + ATP = L-histidyl-tRNA(His) + AMP + diphosphate + H(+). The protein is Histidine--tRNA ligase of Prochlorococcus marinus (strain NATL1A).